A 201-amino-acid polypeptide reads, in one-letter code: Small ribosomal subunit protein uS4 (201 aa).

The S4 RNA-binding domain occupies R92 to V155.

This sequence belongs to the universal ribosomal protein uS4 family. As to quaternary structure, part of the 30S ribosomal subunit. Contacts protein S5. The interaction surface between S4 and S5 is involved in control of translational fidelity.

Its function is as follows. One of the primary rRNA binding proteins, it binds directly to 16S rRNA where it nucleates assembly of the body of the 30S subunit. In terms of biological role, with S5 and S12 plays an important role in translational accuracy. The polypeptide is Small ribosomal subunit protein uS4 (Staphylococcus carnosus (strain TM300)).